The chain runs to 216 residues: Thiopurine S-methyltransferase (216 aa).

S-adenosyl-L-methionine is bound by residues Trp11, Leu46, Glu67, and Arg122.

The protein belongs to the class I-like SAM-binding methyltransferase superfamily. TPMT family.

The protein resides in the cytoplasm. It carries out the reaction S-adenosyl-L-methionine + a thiopurine = S-adenosyl-L-homocysteine + a thiopurine S-methylether.. The protein is Thiopurine S-methyltransferase of Vibrio parahaemolyticus serotype O3:K6 (strain RIMD 2210633).